The chain runs to 349 residues: MIEFDNLTYLHGKPQGTGLLKANPEDFVVVEDLGFEPDGEGEHILVRILKNGCNTRFVADALAKFLKIHAREVSFAGQKDKHAVTEQWLCARVPGKEMPDLSAFQLEGCQVLEYARHKRKLRLGALKGNAFTLVLREVSNRDDVEQRLIDICVKGVPNYFGAQRFGIGGSNLQGAQRWAQTNTPVRDRNKRSFWLSAARSALFNQIVAERLKKADVNQVVDGDALQLAGRGSWFVATTEELAELQRRVNDKELMITAALPGSGEWGTQREALAFEKAAVAAETELQALLVREKVEAARRAMLLYPQQLSWNWWDDVTVEIRFWLPAGSFATSVVRELINTTGDYAHIAE.

Substrate is bound at residue F27. The active-site Nucleophile is D80. Residue N129 participates in substrate binding. The TRUD domain occupies 155–303; sequence GVPNYFGAQR…VEAARRAMLL (149 aa). F329 serves as a coordination point for substrate.

Belongs to the pseudouridine synthase TruD family.

The enzyme catalyses uridine(13) in tRNA = pseudouridine(13) in tRNA. Functionally, responsible for synthesis of pseudouridine from uracil-13 in transfer RNAs. The sequence is that of tRNA pseudouridine synthase D from Shigella sonnei (strain Ss046).